A 317-amino-acid polypeptide reads, in one-letter code: Glycine--tRNA ligase alpha subunit (317 aa).

Belongs to the class-II aminoacyl-tRNA synthetase family. Tetramer of two alpha and two beta subunits.

The protein localises to the cytoplasm. The enzyme catalyses tRNA(Gly) + glycine + ATP = glycyl-tRNA(Gly) + AMP + diphosphate. In Pseudomonas fluorescens (strain SBW25), this protein is Glycine--tRNA ligase alpha subunit.